A 213-amino-acid polypeptide reads, in one-letter code: MKAYQREFIEFALEKEVLKFGEFTLKSGRKSPYFFNAGLFNTGRDLARLGRFYAAALADSGIEFDVLFGPAYKGIPIATTTAVALADHHDIDTPYCFNRKEAKNHGEGGNLVGSALEGRIMLVDDVITAGTAIRESMEIIKANGADLAGVLVAIDRQEKGKGELSAIQEVERDFGCAVISIVSLGDLITYLEEKGNATEHLEAVKAYRAEYGI.

Lys26 contacts 5-phospho-alpha-D-ribose 1-diphosphate. Residue 34-35 (FF) coordinates orotate. 5-phospho-alpha-D-ribose 1-diphosphate contacts are provided by residues 72 to 73 (YK), Arg99, Lys100, Lys103, His105, and 124 to 132 (DDVITAGTA). 2 residues coordinate orotate: Thr128 and Arg156.

Belongs to the purine/pyrimidine phosphoribosyltransferase family. PyrE subfamily. As to quaternary structure, homodimer. It depends on Mg(2+) as a cofactor.

It carries out the reaction orotidine 5'-phosphate + diphosphate = orotate + 5-phospho-alpha-D-ribose 1-diphosphate. The protein operates within pyrimidine metabolism; UMP biosynthesis via de novo pathway; UMP from orotate: step 1/2. Catalyzes the transfer of a ribosyl phosphate group from 5-phosphoribose 1-diphosphate to orotate, leading to the formation of orotidine monophosphate (OMP). The protein is Orotate phosphoribosyltransferase of Vibrio parahaemolyticus serotype O3:K6 (strain RIMD 2210633).